A 227-amino-acid chain; its full sequence is Ribose-5-phosphate isomerase A (227 aa).

Substrate contacts are provided by residues 26–29 (TGST), 82–85 (DGAD), and 95–98 (KGGG). Glutamate 104 functions as the Proton acceptor in the catalytic mechanism. A substrate-binding site is contributed by lysine 122.

It belongs to the ribose 5-phosphate isomerase family. Homodimer.

The catalysed reaction is aldehydo-D-ribose 5-phosphate = D-ribulose 5-phosphate. It functions in the pathway carbohydrate degradation; pentose phosphate pathway; D-ribose 5-phosphate from D-ribulose 5-phosphate (non-oxidative stage): step 1/1. Catalyzes the reversible conversion of ribose-5-phosphate to ribulose 5-phosphate. In Streptococcus pneumoniae serotype 4 (strain ATCC BAA-334 / TIGR4), this protein is Ribose-5-phosphate isomerase A.